A 138-amino-acid polypeptide reads, in one-letter code: ATP synthase epsilon chain (138 aa).

It belongs to the ATPase epsilon chain family. In terms of assembly, F-type ATPases have 2 components, CF(1) - the catalytic core - and CF(0) - the membrane proton channel. CF(1) has five subunits: alpha(3), beta(3), gamma(1), delta(1), epsilon(1). CF(0) has three main subunits: a, b and c.

It is found in the cell membrane. Produces ATP from ADP in the presence of a proton gradient across the membrane. The protein is ATP synthase epsilon chain of Caldanaerobacter subterraneus subsp. tengcongensis (strain DSM 15242 / JCM 11007 / NBRC 100824 / MB4) (Thermoanaerobacter tengcongensis).